A 733-amino-acid polypeptide reads, in one-letter code: Folic acid synthesis protein fol1 (733 aa).

2 DHNA regions span residues Val-55–Arg-167 and Ile-179–Arg-277. Tyr-281 carries the post-translational modification Phosphotyrosine. The segment at Asn-295–Ser-454 is HPK. A Pterin-binding domain is found at Ala-465–Gly-724. The DHPS stretch occupies residues Thr-467–Pro-733. Position 472 (Asn-472) interacts with Mg(2+). (7,8-dihydropterin-6-yl)methyl diphosphate is bound by residues Thr-511, Asp-546, Asn-565, Asp-637, Lys-677, and Arg-712–His-714.

It in the N-terminal section; belongs to the DHNA family. This sequence in the central section; belongs to the HPPK family. In the C-terminal section; belongs to the DHPS family. Mg(2+) serves as cofactor.

It is found in the cytoplasm. It carries out the reaction 7,8-dihydroneopterin = 6-hydroxymethyl-7,8-dihydropterin + glycolaldehyde. The catalysed reaction is 6-hydroxymethyl-7,8-dihydropterin + ATP = (7,8-dihydropterin-6-yl)methyl diphosphate + AMP + H(+). It catalyses the reaction (7,8-dihydropterin-6-yl)methyl diphosphate + 4-aminobenzoate = 7,8-dihydropteroate + diphosphate. Its pathway is cofactor biosynthesis; tetrahydrofolate biosynthesis; 2-amino-4-hydroxy-6-hydroxymethyl-7,8-dihydropteridine diphosphate from 7,8-dihydroneopterin triphosphate: step 3/4. It functions in the pathway cofactor biosynthesis; tetrahydrofolate biosynthesis; 2-amino-4-hydroxy-6-hydroxymethyl-7,8-dihydropteridine diphosphate from 7,8-dihydroneopterin triphosphate: step 4/4. It participates in cofactor biosynthesis; tetrahydrofolate biosynthesis; 7,8-dihydrofolate from 2-amino-4-hydroxy-6-hydroxymethyl-7,8-dihydropteridine diphosphate and 4-aminobenzoate: step 1/2. Catalyzes three sequential steps of tetrahydrofolate biosynthesis. This Schizosaccharomyces pombe (strain 972 / ATCC 24843) (Fission yeast) protein is Folic acid synthesis protein fol1 (fol1).